A 159-amino-acid chain; its full sequence is Secreted RxLR effector protein 50 (159 aa).

The first 19 residues, 1-19, serve as a signal peptide directing secretion; the sequence is MRSSTVLYVLGAAILAVNG. Residues 38 to 54 carry the RxLR-dEER motif; it reads RWLRSNAMEHETDDEER.

The protein belongs to the RxLR effector family.

Its subcellular location is the secreted. It localises to the host nucleus. The protein localises to the host cytoplasm. Functionally, secreted effector that completely suppresses the host cell death induced by cell death-inducing proteins. This is Secreted RxLR effector protein 50 from Plasmopara viticola (Downy mildew of grapevine).